The sequence spans 119 residues: Large ribosomal subunit protein uL18 (119 aa).

Residues 1-24 (MITKQDKNQVRKKRHARVRSKISG) form a disordered region. Residues 10-20 (VRKKRHARVRS) show a composition bias toward basic residues.

Belongs to the universal ribosomal protein uL18 family. As to quaternary structure, part of the 50S ribosomal subunit; part of the 5S rRNA/L5/L18/L25 subcomplex. Contacts the 5S and 23S rRNAs.

This is one of the proteins that bind and probably mediate the attachment of the 5S RNA into the large ribosomal subunit, where it forms part of the central protuberance. This is Large ribosomal subunit protein uL18 from Lysinibacillus sphaericus (strain C3-41).